A 293-amino-acid chain; its full sequence is Xylanase inhibitor protein XIP (293 aa).

Positions 1–21 (MALRRLAALLSLAVLLSAGLA) are cleaved as a signal peptide. One can recognise a GH18 domain in the interval 31–293 (GDTVIIWGRN…DKKTGFTAHL (263 aa)). Disulfide bonds link cysteine 50–cysteine 92 and cysteine 189–cysteine 218.

Belongs to the glycosyl hydrolase 18 family. Xylanase inhibitor subfamily. As to expression, expressed in mature grain.

The protein resides in the secreted. Functionally, fungal xylanase inhibitor. Possesses competitive inhibiting activity against several fungal endo-1,4-beta-D-xylanases belonging to glycoside hydrolase family 10 (GH10) and family 11 (GH11). May function in plant defense against secreted fungal pathogen xylanases. Is similar to class III chitinases, but does not exhibit chitinase activity. The sequence is that of Xylanase inhibitor protein XIP from Oryza sativa subsp. japonica (Rice).